A 200-amino-acid polypeptide reads, in one-letter code: Imidazole glycerol phosphate synthase subunit HisH (200 aa).

A Glutamine amidotransferase type-1 domain is found at 2–200; the sequence is KVAIVEYGVG…LGEVLTGASR (199 aa). Cys79 (nucleophile) is an active-site residue. Residues His179 and Glu181 contribute to the active site.

Heterodimer of HisH and HisF.

It is found in the cytoplasm. The catalysed reaction is 5-[(5-phospho-1-deoxy-D-ribulos-1-ylimino)methylamino]-1-(5-phospho-beta-D-ribosyl)imidazole-4-carboxamide + L-glutamine = D-erythro-1-(imidazol-4-yl)glycerol 3-phosphate + 5-amino-1-(5-phospho-beta-D-ribosyl)imidazole-4-carboxamide + L-glutamate + H(+). It catalyses the reaction L-glutamine + H2O = L-glutamate + NH4(+). Its pathway is amino-acid biosynthesis; L-histidine biosynthesis; L-histidine from 5-phospho-alpha-D-ribose 1-diphosphate: step 5/9. Functionally, IGPS catalyzes the conversion of PRFAR and glutamine to IGP, AICAR and glutamate. The HisH subunit catalyzes the hydrolysis of glutamine to glutamate and ammonia as part of the synthesis of IGP and AICAR. The resulting ammonia molecule is channeled to the active site of HisF. This is Imidazole glycerol phosphate synthase subunit HisH from Methanopyrus kandleri (strain AV19 / DSM 6324 / JCM 9639 / NBRC 100938).